Here is a 666-residue protein sequence, read N- to C-terminus: tRNA 5-methylaminomethyl-2-thiouridine biosynthesis bifunctional protein MnmC (666 aa).

The tract at residues Met1 to Glu245 is tRNA (mnm(5)s(2)U34)-methyltransferase. The segment at Ile270–Lys666 is FAD-dependent cmnm(5)s(2)U34 oxidoreductase.

This sequence in the N-terminal section; belongs to the methyltransferase superfamily. tRNA (mnm(5)s(2)U34)-methyltransferase family. In the C-terminal section; belongs to the DAO family. FAD serves as cofactor.

Its subcellular location is the cytoplasm. The enzyme catalyses 5-aminomethyl-2-thiouridine(34) in tRNA + S-adenosyl-L-methionine = 5-methylaminomethyl-2-thiouridine(34) in tRNA + S-adenosyl-L-homocysteine + H(+). Catalyzes the last two steps in the biosynthesis of 5-methylaminomethyl-2-thiouridine (mnm(5)s(2)U) at the wobble position (U34) in tRNA. Catalyzes the FAD-dependent demodification of cmnm(5)s(2)U34 to nm(5)s(2)U34, followed by the transfer of a methyl group from S-adenosyl-L-methionine to nm(5)s(2)U34, to form mnm(5)s(2)U34. The protein is tRNA 5-methylaminomethyl-2-thiouridine biosynthesis bifunctional protein MnmC of Salmonella choleraesuis (strain SC-B67).